A 270-amino-acid polypeptide reads, in one-letter code: 3-methyl-2-oxobutanoate hydroxymethyltransferase (270 aa).

2 residues coordinate Mg(2+): Asp50 and Asp89. 3-methyl-2-oxobutanoate contacts are provided by residues 50-51 (DS), Asp89, and Lys118. Glu120 serves as a coordination point for Mg(2+). Glu187 (proton acceptor) is an active-site residue.

Belongs to the PanB family. Homodecamer; pentamer of dimers. The cofactor is Mg(2+).

Its subcellular location is the cytoplasm. The catalysed reaction is 3-methyl-2-oxobutanoate + (6R)-5,10-methylene-5,6,7,8-tetrahydrofolate + H2O = 2-dehydropantoate + (6S)-5,6,7,8-tetrahydrofolate. The protein operates within cofactor biosynthesis; (R)-pantothenate biosynthesis; (R)-pantoate from 3-methyl-2-oxobutanoate: step 1/2. In terms of biological role, catalyzes the reversible reaction in which hydroxymethyl group from 5,10-methylenetetrahydrofolate is transferred onto alpha-ketoisovalerate to form ketopantoate. The polypeptide is 3-methyl-2-oxobutanoate hydroxymethyltransferase (Helicobacter pylori (strain ATCC 700392 / 26695) (Campylobacter pylori)).